Here is a 296-residue protein sequence, read N- to C-terminus: Bifunctional protein FolD (296 aa).

NADP(+) is bound by residues 168-170, S197, and T238; that span reads GRS.

The protein belongs to the tetrahydrofolate dehydrogenase/cyclohydrolase family. Homodimer.

It catalyses the reaction (6R)-5,10-methylene-5,6,7,8-tetrahydrofolate + NADP(+) = (6R)-5,10-methenyltetrahydrofolate + NADPH. The enzyme catalyses (6R)-5,10-methenyltetrahydrofolate + H2O = (6R)-10-formyltetrahydrofolate + H(+). The protein operates within one-carbon metabolism; tetrahydrofolate interconversion. Functionally, catalyzes the oxidation of 5,10-methylenetetrahydrofolate to 5,10-methenyltetrahydrofolate and then the hydrolysis of 5,10-methenyltetrahydrofolate to 10-formyltetrahydrofolate. The sequence is that of Bifunctional protein FolD from Porphyromonas gingivalis (strain ATCC BAA-308 / W83).